A 140-amino-acid chain; its full sequence is uncharacterized protein (140 aa).

2 helical membrane passes run 4–21 and 26–48; these read ILKF…YLFG and LVKV…SGYL.

The protein belongs to the bacteriophage holin family. Cp-1 holin subfamily.

It is found in the cell membrane. This is an uncharacterized protein from Listeria monocytogenes serovar 1/2a (strain ATCC BAA-679 / EGD-e).